We begin with the raw amino-acid sequence, 36 residues long: MTDLNLPSIFVPLVGLLFPAIAMVSLFFHVQKNKIV.

Residues 6-28 (LPSIFVPLVGLLFPAIAMVSLFF) traverse the membrane as a helical segment.

It belongs to the PsaI family.

Its subcellular location is the plastid. The protein localises to the chloroplast thylakoid membrane. Its function is as follows. May help in the organization of the PsaL subunit. This Nymphaea alba (White water-lily) protein is Photosystem I reaction center subunit VIII.